The sequence spans 88 residues: Phosphocarrier protein HPr (88 aa).

The HPr domain maps to 1–88 (MASKEFHIVV…ETMTKEGLAE (88 aa)). The Pros-phosphohistidine intermediate role is filled by His15. Phosphoserine; by HPrK/P is present on Ser46.

Belongs to the HPr family.

It localises to the cytoplasm. Its activity is regulated as follows. Phosphorylation on Ser-46 inhibits the phosphoryl transfer from enzyme I to HPr. In terms of biological role, general (non sugar-specific) component of the phosphoenolpyruvate-dependent sugar phosphotransferase system (sugar PTS). This major carbohydrate active-transport system catalyzes the phosphorylation of incoming sugar substrates concomitantly with their translocation across the cell membrane. The phosphoryl group from phosphoenolpyruvate (PEP) is transferred to the phosphoryl carrier protein HPr by enzyme I. Phospho-HPr then transfers it to the PTS EIIA domain. P-Ser-HPr interacts with the catabolite control protein A (CcpA), forming a complex that binds to DNA at the catabolite response elements cre, operator sites preceding a large number of catabolite-regulated genes. Thus, P-Ser-HPr is a corepressor in carbon catabolite repression (CCR), a mechanism that allows bacteria to coordinate and optimize the utilization of available carbon sources. P-Ser-HPr also plays a role in inducer exclusion, in which it probably interacts with several non-PTS permeases and inhibits their transport activity. The polypeptide is Phosphocarrier protein HPr (ptsH) (Lactococcus lactis subsp. lactis (strain IL1403) (Streptococcus lactis)).